The primary structure comprises 56 residues: Cytochrome b-c1 complex subunit 10 (56 aa).

Residues M1–Q12 are Mitochondrial matrix-facing. The chain crosses the membrane as a helical span at residues L13–A35. Over T36 to D56 the chain is Mitochondrial intermembrane.

It belongs to the UQCR11/QCR10 family. Component of the ubiquinol-cytochrome c oxidoreductase (cytochrome b-c1 complex, complex III, CIII), a multisubunit enzyme composed of 11 subunits. The complex is composed of 3 respiratory subunits cytochrome b, cytochrome c1 and Rieske protein UQCRFS1, 2 core protein subunits UQCRC1/QCR1 and UQCRC2/QCR2, and 6 low-molecular weight protein subunits UQCRH/QCR6, UQCRB/QCR7, UQCRQ/QCR8, UQCR10/QCR9, UQCR11/QCR10 and subunit 9, the cleavage product of Rieske protein UQCRFS1. The complex exists as an obligatory dimer and forms supercomplexes (SCs) in the inner mitochondrial membrane with NADH-ubiquinone oxidoreductase (complex I, CI) and cytochrome c oxidase (complex IV, CIV), resulting in different assemblies (supercomplex SCI(1)III(2)IV(1) and megacomplex MCI(2)III(2)IV(2)).

Its subcellular location is the mitochondrion inner membrane. Functionally, component of the ubiquinol-cytochrome c oxidoreductase, a multisubunit transmembrane complex that is part of the mitochondrial electron transport chain which drives oxidative phosphorylation. The respiratory chain contains 3 multisubunit complexes succinate dehydrogenase (complex II, CII), ubiquinol-cytochrome c oxidoreductase (cytochrome b-c1 complex, complex III, CIII) and cytochrome c oxidase (complex IV, CIV), that cooperate to transfer electrons derived from NADH and succinate to molecular oxygen, creating an electrochemical gradient over the inner membrane that drives transmembrane transport and the ATP synthase. The cytochrome b-c1 complex catalyzes electron transfer from ubiquinol to cytochrome c, linking this redox reaction to translocation of protons across the mitochondrial inner membrane, with protons being carried across the membrane as hydrogens on the quinol. In the process called Q cycle, 2 protons are consumed from the matrix, 4 protons are released into the intermembrane space and 2 electrons are passed to cytochrome c. QCR10 has a role in CIII assembly and RIP1 stability. In Bos taurus (Bovine), this protein is Cytochrome b-c1 complex subunit 10 (UQCR11).